The chain runs to 788 residues: Integrin beta-6 (788 aa).

A signal peptide spans 1-21; the sequence is MGIELLCLFFLCLGRNDHVQG. The region spanning 22–71 is the PSI domain; the sequence is GCAVGGAETCEDCLLIGPQCAWCSQENFTHLSGVGERCDTPANLLAKGCQ. The Extracellular portion of the chain corresponds to 22 to 709; the sequence is GCAVGGAETC…KDCPKPPNIP (688 aa). 19 disulfides stabilise this stretch: cysteine 23/cysteine 41, cysteine 31/cysteine 454, cysteine 34/cysteine 59, cysteine 44/cysteine 70, cysteine 197/cysteine 204, cysteine 252/cysteine 293, cysteine 394/cysteine 406, cysteine 426/cysteine 452, cysteine 456/cysteine 476, cysteine 467/cysteine 479, cysteine 481/cysteine 490, cysteine 492/cysteine 519, cysteine 502/cysteine 517, cysteine 511/cysteine 522, cysteine 524/cysteine 537, cysteine 539/cysteine 560, cysteine 544/cysteine 558, cysteine 552/cysteine 563, and cysteine 565/cysteine 574. N-linked (GlcNAc...) asparagine glycosylation is found at asparagine 48 and asparagine 97. One can recognise a VWFA domain in the interval 131-371; it reads YPVDLYYLMD…QLIISAYEEL (241 aa). Residues aspartate 140, serine 142, and serine 144 each contribute to the Mg(2+) site. Positions 144, 147, 148, and 179 each coordinate Ca(2+). Residues asparagine 235, aspartate 237, proline 239, and glutamate 240 each coordinate Ca(2+). Glutamate 240 provides a ligand contact to Mg(2+). N-linked (GlcNAc...) asparagine glycosylation is present at asparagine 260. 2 residues coordinate Ca(2+): aspartate 271 and lysine 355. Residue asparagine 387 is glycosylated (N-linked (GlcNAc...) asparagine). The N-linked (GlcNAc...) asparagine glycan is linked to asparagine 418. 4 consecutive I-EGF domains span residues 456-491, 492-538, 539-575, and 576-615; these read CQKE…HHCE, CGED…PYCQ, CDNF…EYCN, and CTTS…PTCE. N-linked (GlcNAc...) asparagine glycosylation is found at asparagine 463 and asparagine 471. Asparagine 541 carries N-linked (GlcNAc...) asparagine glycosylation. A glycan (N-linked (GlcNAc...) asparagine) is linked at asparagine 575. 9 disulfides stabilise this stretch: cysteine 576–cysteine 599, cysteine 583–cysteine 597, cysteine 591–cysteine 602, cysteine 604–cysteine 614, cysteine 617–cysteine 620, cysteine 624–cysteine 670, cysteine 630–cysteine 649, cysteine 633–cysteine 645, and cysteine 678–cysteine 702. Residues 710 to 730 traverse the membrane as a helical segment; the sequence is MIMLGVSLAILLIGVVLLCIW. The segment at 731-758 is interaction with HAX1; that stretch reads KLLVSFHDRKEVAKFEAERSKAKWQTGT. Residues 731–788 are Cytoplasmic-facing; the sequence is KLLVSFHDRKEVAKFEAERSKAKWQTGTNPLYRGSTSTFKNVTYKHKEKQKVDLSTDG.

This sequence belongs to the integrin beta chain family. In terms of assembly, heterodimer of an alpha and a beta subunit. Interacts with FLNB. Interacts with HAX1. ITGAV:ITGB6 interacts with FBN1. ITGAV:ITGB6 interacts with TGFB1.

The protein resides in the cell membrane. Its subcellular location is the cell junction. It localises to the focal adhesion. Integrin alpha-V:beta-6 (ITGAV:ITGB6) is a receptor for fibronectin and cytotactin. It recognizes the sequence R-G-D in its ligands. ITGAV:ITGB6 acts as a receptor for fibrillin-1 (FBN1) and mediates R-G-D-dependent cell adhesion to FBN1. Integrin alpha-V:beta-6 (ITGAV:ITGB6) mediates R-G-D-dependent release of transforming growth factor beta-1 (TGF-beta-1) from regulatory Latency-associated peptide (LAP), thereby playing a key role in TGF-beta-1 activation. The polypeptide is Integrin beta-6 (ITGB6) (Bos taurus (Bovine)).